The following is an 87-amino-acid chain: MTKVFCKKYHQELDAIPFQPLPGELGKKIHNEISNKAWQAWLAHQTILINEYRLNLIEPKAKEFLKEEMHKFLFEGKEEKPEQFSEI.

Belongs to the Fe(2+)-trafficking protein family.

Its function is as follows. Could be a mediator in iron transactions between iron acquisition and iron-requiring processes, such as synthesis and/or repair of Fe-S clusters in biosynthetic enzymes. This Francisella tularensis subsp. novicida (strain U112) protein is Probable Fe(2+)-trafficking protein.